We begin with the raw amino-acid sequence, 644 residues long: Exoribonuclease 2 (644 aa).

An RNB domain is found at 189–516 (REDLTALDFV…NHRLLKAVIK (328 aa)). The region spanning 561–643 (DTRFAAEIVD…ETRSIIARPV (83 aa)) is the S1 motif domain.

Belongs to the RNR ribonuclease family. RNase II subfamily.

The protein localises to the cytoplasm. It carries out the reaction Exonucleolytic cleavage in the 3'- to 5'-direction to yield nucleoside 5'-phosphates.. In terms of biological role, involved in mRNA degradation. Hydrolyzes single-stranded polyribonucleotides processively in the 3' to 5' direction. This is Exoribonuclease 2 from Escherichia coli O6:K15:H31 (strain 536 / UPEC).